The primary structure comprises 321 residues: Probable pectate lyase A (321 aa).

The first 18 residues, 1-18, serve as a signal peptide directing secretion; it reads MKFVATLIACGLSGLALA. Asn93 is a glycosylation site (N-linked (GlcNAc...) asparagine). Residues Asp134, Asp163, and Asp167 each coordinate Ca(2+). Arg220 is a catalytic residue. The N-linked (GlcNAc...) asparagine glycan is linked to Asn238.

It belongs to the polysaccharide lyase 1 family. Ca(2+) serves as cofactor.

Its subcellular location is the secreted. The catalysed reaction is Eliminative cleavage of (1-&gt;4)-alpha-D-galacturonan to give oligosaccharides with 4-deoxy-alpha-D-galact-4-enuronosyl groups at their non-reducing ends.. In terms of biological role, pectinolytic enzyme consist of four classes of enzymes: pectin lyase, polygalacturonase, pectin methylesterase and rhamnogalacturonase. Among pectinolytic enzymes, pectin lyase is the most important in depolymerization of pectin, since it cleaves internal glycosidic bonds of highly methylated pectins. Favors pectate, the anion, over pectin, the methyl ester. The protein is Probable pectate lyase A (plyA) of Neosartorya fischeri (strain ATCC 1020 / DSM 3700 / CBS 544.65 / FGSC A1164 / JCM 1740 / NRRL 181 / WB 181) (Aspergillus fischerianus).